Reading from the N-terminus, the 445-residue chain is Phosphoglucosamine mutase (445 aa).

The active-site Phosphoserine intermediate is the serine 102. Mg(2+)-binding residues include serine 102, aspartate 241, aspartate 243, and aspartate 245. Serine 102 is subject to Phosphoserine.

The protein belongs to the phosphohexose mutase family. Mg(2+) is required as a cofactor. In terms of processing, activated by phosphorylation.

The enzyme catalyses alpha-D-glucosamine 1-phosphate = D-glucosamine 6-phosphate. Catalyzes the conversion of glucosamine-6-phosphate to glucosamine-1-phosphate. In Serratia proteamaculans (strain 568), this protein is Phosphoglucosamine mutase.